Reading from the N-terminus, the 236-residue chain is Small ribosomal subunit protein eS6 (236 aa).

A phosphoserine mark is found at serine 232 and serine 233.

The protein belongs to the eukaryotic ribosomal protein eS6 family. In terms of processing, phosphorylated.

The sequence is that of Small ribosomal subunit protein eS6 (RPS6A) from Candida glabrata (strain ATCC 2001 / BCRC 20586 / JCM 3761 / NBRC 0622 / NRRL Y-65 / CBS 138) (Yeast).